Here is a 387-residue protein sequence, read N- to C-terminus: Limonene 1,2-monooxygenase (387 aa).

This sequence belongs to the bacterial luciferase oxidoreductase family. FAD is required as a cofactor.

The enzyme catalyses (4S)-limonene + NADPH + O2 + H(+) = limonene 1,2-epoxide + NADP(+) + H2O. It catalyses the reaction (4S)-limonene + NADH + O2 + H(+) = limonene 1,2-epoxide + NAD(+) + H2O. The catalysed reaction is (4R)-limonene + NADH + O2 + H(+) = limonene 1,2-epoxide + NAD(+) + H2O. It carries out the reaction (4R)-limonene + NADPH + O2 + H(+) = limonene 1,2-epoxide + NADP(+) + H2O. The protein operates within terpene metabolism; (4R)-limonene degradation; (1S,4R)-1-hydroxylimonen-2-one from (4R)-limonene: step 1/3. Acts on both enantiomers of limonene by their NAD-dependent epoxidation at the 1,2 double bond forming limonene-1,2-epoxide. The protein is Limonene 1,2-monooxygenase (limB) of Rhodococcus erythropolis (Arthrobacter picolinophilus).